We begin with the raw amino-acid sequence, 381 residues long: Probable tRNA sulfurtransferase (381 aa).

Positions 55-163 (GECLENLNKV…DDEAFIYHEK (109 aa)) constitute a THUMP domain. Residues 181 to 182 (LV), Lys265, Gly287, and Gln296 each bind ATP.

This sequence belongs to the ThiI family.

It is found in the cytoplasm. It carries out the reaction [ThiI sulfur-carrier protein]-S-sulfanyl-L-cysteine + a uridine in tRNA + 2 reduced [2Fe-2S]-[ferredoxin] + ATP + H(+) = [ThiI sulfur-carrier protein]-L-cysteine + a 4-thiouridine in tRNA + 2 oxidized [2Fe-2S]-[ferredoxin] + AMP + diphosphate. The catalysed reaction is [ThiS sulfur-carrier protein]-C-terminal Gly-Gly-AMP + S-sulfanyl-L-cysteinyl-[cysteine desulfurase] + AH2 = [ThiS sulfur-carrier protein]-C-terminal-Gly-aminoethanethioate + L-cysteinyl-[cysteine desulfurase] + A + AMP + 2 H(+). It participates in cofactor biosynthesis; thiamine diphosphate biosynthesis. Catalyzes the ATP-dependent transfer of a sulfur to tRNA to produce 4-thiouridine in position 8 of tRNAs, which functions as a near-UV photosensor. Also catalyzes the transfer of sulfur to the sulfur carrier protein ThiS, forming ThiS-thiocarboxylate. This is a step in the synthesis of thiazole, in the thiamine biosynthesis pathway. The sulfur is donated as persulfide by IscS. This is Probable tRNA sulfurtransferase from Methanobrevibacter smithii (strain ATCC 35061 / DSM 861 / OCM 144 / PS).